The chain runs to 231 residues: 7-cyano-7-deazaguanine synthase (231 aa).

8-18 provides a ligand contact to ATP; it reads FSGGQDSTTCL. C188, C197, C200, and C203 together coordinate Zn(2+).

Belongs to the QueC family. Zn(2+) serves as cofactor.

The catalysed reaction is 7-carboxy-7-deazaguanine + NH4(+) + ATP = 7-cyano-7-deazaguanine + ADP + phosphate + H2O + H(+). The protein operates within purine metabolism; 7-cyano-7-deazaguanine biosynthesis. Its function is as follows. Catalyzes the ATP-dependent conversion of 7-carboxy-7-deazaguanine (CDG) to 7-cyano-7-deazaguanine (preQ(0)). In Salmonella arizonae (strain ATCC BAA-731 / CDC346-86 / RSK2980), this protein is 7-cyano-7-deazaguanine synthase.